Here is a 269-residue protein sequence, read N- to C-terminus: Energy-coupling factor transporter ATP-binding protein EcfA1 (269 aa).

The 235-residue stretch at 8-242 (IVFKNVSFQY…AEELTTIGLD (235 aa)) folds into the ABC transporter domain. 42–49 (GHNGSGKS) provides a ligand contact to ATP.

It belongs to the ABC transporter superfamily. Energy-coupling factor EcfA family. Forms a stable energy-coupling factor (ECF) transporter complex composed of 2 membrane-embedded substrate-binding proteins (S component), 2 ATP-binding proteins (A component) and 2 transmembrane proteins (T component).

It localises to the cell membrane. Functionally, ATP-binding (A) component of a common energy-coupling factor (ECF) ABC-transporter complex. Unlike classic ABC transporters this ECF transporter provides the energy necessary to transport a number of different substrates. This is Energy-coupling factor transporter ATP-binding protein EcfA1 from Staphylococcus aureus (strain MRSA252).